The following is a 104-amino-acid chain: Large ribosomal subunit protein bL21 (104 aa).

It belongs to the bacterial ribosomal protein bL21 family. As to quaternary structure, part of the 50S ribosomal subunit. Contacts protein L20.

Its function is as follows. This protein binds to 23S rRNA in the presence of protein L20. In Helicobacter pylori (strain G27), this protein is Large ribosomal subunit protein bL21.